The sequence spans 283 residues: Cyclin-C (283 aa).

The Cyclin N-terminal domain maps to 46–144 (NVIQALGEHL…ILECEFYLLE (99 aa)). The disordered stretch occupies residues 252-283 (TILSKMPKPKPPPNSEGEQGPNGSQNSSYSQS). Positions 272–283 (PNGSQNSSYSQS) are enriched in polar residues.

It belongs to the cyclin family. Cyclin C subfamily. As to quaternary structure, component of the Mediator complex. The cylin/CDK pair formed by CCNC/CDK8 also associates with the large subunit of RNA polymerase II.

It localises to the nucleus. Functionally, component of the Mediator complex, a coactivator involved in regulated gene transcription of nearly all RNA polymerase II-dependent genes. Mediator functions as a bridge to convey information from gene-specific regulatory proteins to the basal RNA polymerase II transcription machinery. Mediator is recruited to promoters by direct interactions with regulatory proteins and serves as a scaffold for the assembly of a functional preinitiation complex with RNA polymerase II and the general transcription factors. Binds to and activates cyclin-dependent kinase CDK8 that phosphorylates the CTD (C-terminal domain) of the large subunit of RNA polymerase II (RNAp II), which may inhibit the formation of a transcription initiation complex. The chain is Cyclin-C (CCNC) from Gallus gallus (Chicken).